A 291-amino-acid chain; its full sequence is N-acetylmannosamine kinase (291 aa).

ATP-binding positions include 5-12 (AIDIGGTK) and 132-139 (GVGGGVVC). Zn(2+) is bound by residues H156, C166, C168, and C173.

The protein belongs to the ROK (NagC/XylR) family. NanK subfamily. Homodimer.

The enzyme catalyses an N-acyl-D-mannosamine + ATP = an N-acyl-D-mannosamine 6-phosphate + ADP + H(+). It functions in the pathway amino-sugar metabolism; N-acetylneuraminate degradation; D-fructose 6-phosphate from N-acetylneuraminate: step 2/5. Functionally, catalyzes the phosphorylation of N-acetylmannosamine (ManNAc) to ManNAc-6-P. The sequence is that of N-acetylmannosamine kinase from Salmonella paratyphi A (strain ATCC 9150 / SARB42).